The chain runs to 210 residues: 7-methyl-GTP pyrophosphatase (210 aa).

Catalysis depends on Asp79, which acts as the Proton acceptor.

It belongs to the Maf family. YceF subfamily. Requires a divalent metal cation as cofactor.

It is found in the cytoplasm. It catalyses the reaction N(7)-methyl-GTP + H2O = N(7)-methyl-GMP + diphosphate + H(+). Functionally, nucleoside triphosphate pyrophosphatase that hydrolyzes 7-methyl-GTP (m(7)GTP). May have a dual role in cell division arrest and in preventing the incorporation of modified nucleotides into cellular nucleic acids. In Burkholderia orbicola (strain AU 1054), this protein is 7-methyl-GTP pyrophosphatase.